Here is a 2566-residue protein sequence, read N- to C-terminus: Zinc finger protein GLI1 (2566 aa).

Disordered stretches follow at residues 349–375 (HHSS…SQSS), 430–508 (DIRR…RSTG), and 985–1046 (KSIE…GDPD). Polar residues-rich tracts occupy residues 434–444 (TLSSNGNSSHT) and 457–492 (WSPN…YQQH). Low complexity predominate over residues 493 to 508 (SGYTSTSGSSGNRSTG). Residues 993-1016 (WQNQNVFSSRRNSTRDPSNNNNSG) show a composition bias toward polar residues. Acidic residues predominate over residues 1023-1035 (DEPDVDDDEELDD). Residues 1088-1110 (RECVRGTRPFKAQYMLVVHMRRH) form a C2H2-type 1; degenerate zinc finger. C2H2-type zinc fingers lie at residues 1116–1140 (HKCI…LRSH), 1146–1171 (YQCE…NRTH), and 1177–1202 (YTCK…KTVH). Disordered regions lie at residues 1254 to 1313 (GNSN…PRDS), 1465 to 1491 (LSTT…TKQK), 1650 to 1677 (SKNM…NQNE), 1727 to 1791 (AAAS…MDND), and 2067 to 2091 (MHFS…NRPH). 2 stretches are compositionally biased toward low complexity: residues 1661–1677 (NNNE…NQNE) and 1727–1743 (AAAS…TTAS). The span at 1752 to 1769 (NHHHQKQQPKHSHQHQNR) shows a compositional bias: basic residues. Over residues 1770–1791 (TKSINSDNNYSNQDNVSTMDND) the composition is skewed to polar residues. Over residues 2070-2090 (SPHSYVHSSSSNSSPFNSNRP) the composition is skewed to low complexity.

The protein belongs to the GLI C2H2-type zinc-finger protein family. In terms of tissue distribution, expressed in female-paired or unpaired males along the ventral surface in neurons and skin tegument cells. In virgin and mature females, expressed bilaterally along the edges of the body in neurons. In mature females, also expressed in skin tegument cells.

The protein localises to the nucleus. Functionally, probable transcription factor which plays an essential role in males to trigger female sexual development by inducing NRPS expression in male. NRPS produces the pheromone beta-alanyl-tryptamine (BATT), which stimulates female sexual development. The polypeptide is Zinc finger protein GLI1 (Schistosoma mansoni (Blood fluke)).